The sequence spans 464 residues: ERO1-like protein alpha (464 aa).

Residues 1–23 (MGRGWGLLVGLLGVVWLLRSGQG) form the signal peptide. Cystine bridges form between Cys35/Cys48, Cys37/Cys46, Cys85/Cys387, Cys94/Cys99, Cys94/Cys130, Cys99/Cys104, Cys207/Cys237, and Cys390/Cys393. 3 positions are modified to phosphoserine: Ser106, Ser142, and Ser144. Positions 186, 188, and 199 each coordinate FAD. FAD-binding residues include Ser248 and His251. A glycan (N-linked (GlcNAc...) asparagine) is linked at Asn276. FAD is bound by residues Arg283 and Arg296. Residue Asn380 is glycosylated (N-linked (GlcNAc...) asparagine).

Belongs to the EROs family. Predominantly monomer. May function both as a monomer and a homodimer. Interacts with PDILT. Interacts with ERP44; the interaction results in retention of ERO1A in the endoplasmic reticulum. FAD is required as a cofactor. Post-translationally, N-glycosylated. The Cys-94/Cys-99 and Cys-390/Cys-393 disulfide bonds constitute the redox-active center. The Cys-94/Cys-99 disulfide bond may accept electron from P4HB and funnel them to the active site disulfide Cys-390/Cys-393. The regulatory Cys-99/Cys-104 disulfide bond stabilizes the other regulatory bond Cys-94/Cys-130. In terms of processing, phosphorylated on Ser-144 by FAM20C in the Golgi which increases its enzymatic activity. Phosphorylation is induced by lactation. It is also induced by hypoxia and reductive stress.

It is found in the endoplasmic reticulum membrane. It localises to the golgi apparatus lumen. The protein localises to the secreted. The protein resides in the cell projection. Its subcellular location is the dendrite. Its activity is regulated as follows. Enzyme activity is tightly regulated to prevent the accumulation of reactive oxygen species in the endoplasmic reticulum. Reversibly down-regulated by the formation of disulfide bonds between the active site Cys-94 and Cys-130, and between Cys-99 and Cys-104. Glutathione may be required to regulate its activity in the endoplasmic reticulum. Its function is as follows. Oxidoreductase involved in disulfide bond formation in the endoplasmic reticulum. Efficiently reoxidizes P4HB/PDI, the enzyme catalyzing protein disulfide formation, in order to allow P4HB to sustain additional rounds of disulfide formation. Following P4HB reoxidation, passes its electrons to molecular oxygen via FAD, leading to the production of reactive oxygen species (ROS) in the cell. Required for the proper folding of immunoglobulins. Plays an important role in ER stress-induced, CHOP-dependent apoptosis by activating the inositol 1,4,5-trisphosphate receptor IP3R1. This chain is ERO1-like protein alpha, found in Rattus norvegicus (Rat).